A 690-amino-acid polypeptide reads, in one-letter code: Highly divergent homeobox (690 aa).

A DNA-binding region (homeobox 1) is located at residues leucine 3–asparagine 63. 2 disordered regions span residues lysine 55–serine 76 and serine 112–glutamate 132. The segment covering serine 64–serine 76 has biased composition (low complexity). Positions proline 113–asparagine 123 are enriched in polar residues. Residues lysine 135, lysine 140, lysine 144, lysine 163, lysine 172, lysine 194, lysine 212, lysine 221, and lysine 232 each participate in a glycyl lysine isopeptide (Lys-Gly) (interchain with G-Cter in SUMO2) cross-link. The homeobox 2 DNA-binding region spans alanine 435–glycine 498. Residues valine 501 to arginine 539 form a disordered region. Lysine 613 participates in a covalent cross-link: Glycyl lysine isopeptide (Lys-Gly) (interchain with G-Cter in SUMO2). The segment at phenylalanine 664 to leucine 690 is disordered. A compositionally biased stretch (polar residues) spans threonine 674–leucine 690.

It is found in the nucleus. The protein is Highly divergent homeobox (HDX) of Homo sapiens (Human).